The chain runs to 378 residues: Putative glutamate--cysteine ligase 2-1 (378 aa).

The protein belongs to the glutamate--cysteine ligase type 2 family. YbdK subfamily.

It catalyses the reaction L-cysteine + L-glutamate + ATP = gamma-L-glutamyl-L-cysteine + ADP + phosphate + H(+). In terms of biological role, ATP-dependent carboxylate-amine ligase which exhibits weak glutamate--cysteine ligase activity. In Corynebacterium efficiens (strain DSM 44549 / YS-314 / AJ 12310 / JCM 11189 / NBRC 100395), this protein is Putative glutamate--cysteine ligase 2-1.